The sequence spans 297 residues: MAKALQGVMAALLTPFDHQQQLDSESLRRLVRFNIGQGIDGLYVGGSTGEAFVQSLAEREQVLEIVAEEAKGKITLIAHVGTVSTAESQQLASAAKRYGFDAVSAVTPFYYPFSFEEHCDHYRAIIDSADGLPMVVYNIPALSGVKLTLDQINTLVTLPGVNALKQTSGDLFQMEQIRRAHPDLVLYNGYDEIFASGLLAGADGGIGSTYNIMGWRYQGIVQALREGDVAKAQRLQTECNKVIDLLIKTGVFRGLKTVLHYMDVVSVPLCRKPFAPVDEKYLPALKALAQQLMEEKA.

Aceneuramate is bound by residues serine 47 and threonine 48. Tyrosine 137 functions as the Proton donor in the catalytic mechanism. The active-site Schiff-base intermediate with substrate is lysine 165. Aceneuramate is bound by residues threonine 167, glycine 189, aspartate 191, glutamate 192, and serine 208.

Belongs to the DapA family. NanA subfamily. In terms of assembly, homotetramer.

Its subcellular location is the cytoplasm. The catalysed reaction is aceneuramate = aldehydo-N-acetyl-D-mannosamine + pyruvate. The protein operates within amino-sugar metabolism; N-acetylneuraminate degradation; D-fructose 6-phosphate from N-acetylneuraminate: step 1/5. Functionally, catalyzes the reversible aldol cleavage of N-acetylneuraminic acid (sialic acid; Neu5Ac) to form pyruvate and N-acetylmannosamine (ManNAc) via a Schiff base intermediate. The sequence is that of N-acetylneuraminate lyase from Salmonella paratyphi A (strain AKU_12601).